The primary structure comprises 251 residues: Mast cell protease 3 (251 aa).

The N-terminal stretch at 1–17 (MVLFLLLVALLSPAGEA) is a signal peptide. Residues 18 to 19 (GK) constitute a propeptide, activation peptide. The 224-residue stretch at 20-243 (IIGGHEAKPH…FLSWIQRTMR (224 aa)) folds into the Peptidase S1 domain. An intrachain disulfide couples Cys-48 to Cys-64. His-63 serves as the catalytic Charge relay system. A glycan (N-linked (GlcNAc...) asparagine) is linked at Asn-70. Asp-107 serves as the catalytic Charge relay system. Cystine bridges form between Cys-141–Cys-207 and Cys-172–Cys-186. The active-site Charge relay system is the Ser-201.

The protein belongs to the peptidase S1 family. Granzyme subfamily.

Its subcellular location is the secreted. It localises to the cytoplasmic granule. The sequence is that of Mast cell protease 3 from Ovis aries (Sheep).